Consider the following 209-residue polypeptide: MAIERYFIKEGVKEMLIDEFLEKELRRAGYGGLDIKKTPLGTKVTIFAANPGYVIGRGGRRIRELTRILEKQFGLENPQIEVEEIKNPYLNAKVQAVRLAQALERGIHFRRAAYSAIRAIMRNGARGVEIRLSGKLTGERAKSVRFYQGYLAKVGNPAETLVSRGYAQAQLKLGVIGVKVSIMPPDAKLPDEIEIKEIVEEEVSANEAQ.

Residues 17 to 86 form the KH type-2 domain; it reads IDEFLEKELR…NPQIEVEEIK (70 aa).

Belongs to the universal ribosomal protein uS3 family. As to quaternary structure, part of the 30S ribosomal subunit.

Its function is as follows. Binds the lower part of the 30S subunit head. In Thermococcus kodakarensis (strain ATCC BAA-918 / JCM 12380 / KOD1) (Pyrococcus kodakaraensis (strain KOD1)), this protein is Small ribosomal subunit protein uS3.